The chain runs to 223 residues: Small ribosomal subunit protein uS3 (223 aa).

Positions 39 to 108 constitute a KH type-2 domain; sequence IRNFVKKNSY…NILINIVEVK (70 aa).

This sequence belongs to the universal ribosomal protein uS3 family. In terms of assembly, part of the 30S ribosomal subunit. Forms a tight complex with proteins S10 and S14.

Binds the lower part of the 30S subunit head. Binds mRNA in the 70S ribosome, positioning it for translation. This is Small ribosomal subunit protein uS3 from Clostridium botulinum (strain 657 / Type Ba4).